The following is a 103-amino-acid chain: Small ribosomal subunit protein uS10 (103 aa).

The protein belongs to the universal ribosomal protein uS10 family. As to quaternary structure, part of the 30S ribosomal subunit.

Functionally, involved in the binding of tRNA to the ribosomes. The protein is Small ribosomal subunit protein uS10 of Hydrogenovibrio crunogenus (strain DSM 25203 / XCL-2) (Thiomicrospira crunogena).